The primary structure comprises 439 residues: 23S rRNA (uracil(1939)-C(5))-methyltransferase RlmD (439 aa).

In terms of domain architecture, TRAM spans 10–68 (QKKLRAAFTTIVQDLDYQGLGVAKIQGKTWFIENALPQEQVQVQVIEEKRQYGLGRVQK). Positions 81, 87, 90, and 168 each coordinate [4Fe-4S] cluster. Positions 271, 300, 305, 321, 348, and 369 each coordinate S-adenosyl-L-methionine. Catalysis depends on Cys395, which acts as the Nucleophile.

This sequence belongs to the class I-like SAM-binding methyltransferase superfamily. RNA M5U methyltransferase family. RlmD subfamily.

It carries out the reaction uridine(1939) in 23S rRNA + S-adenosyl-L-methionine = 5-methyluridine(1939) in 23S rRNA + S-adenosyl-L-homocysteine + H(+). Catalyzes the formation of 5-methyl-uridine at position 1939 (m5U1939) in 23S rRNA. The sequence is that of 23S rRNA (uracil(1939)-C(5))-methyltransferase RlmD from Histophilus somni (strain 129Pt) (Haemophilus somnus).